A 164-amino-acid chain; its full sequence is MPELLKERVETCYQQAETFFKRPFPRPEVSFKLRGQKAGVAHLHENLLRFNLQLYRENQEDFLRQTVAHEVAHLVAHQLFGDSIQAHGEEWQLIMRGVYELPPNRCHNYEVQRRATTRYIYRCPCPQGDFPFTAQRHKLVRQGRRYLCKRCRAILVYSGETRVE.

The SprT-like domain occupies 14–156 (QQAETFFKRP…LCKRCRAILV (143 aa)). Position 69 (His-69) interacts with Zn(2+). Residue Glu-70 is part of the active site. His-73 lines the Zn(2+) pocket.

This sequence belongs to the SprT family. Requires Zn(2+) as cofactor.

It localises to the cytoplasm. This chain is Protein SprT, found in Pseudomonas putida (strain GB-1).